The following is a 308-amino-acid chain: MKVIFAGTPDFAAAALRAVAAAGFEIPLVLTQPDRPKGRGMQLTAPPVKQAALELGLRVEQPEKLRNNAEALQMLKEVEADVMVVAAYGLILPQDVLDVPKHGCLNIHASLLPRWRGAAPIQRAIEAGDAETGVCIMQMDAGLDTGDVVSEHRYAIRPTDTANEVHDALMEIGAAAVVADLQQLQSKGRLNAVKQPKEGVTYAQKLSKEEARIDWSESAAVIERKIRAFNPVPAAWVEYQGKPMKIRRAEVVAQQGAAGEVLSCSADGLVVACGENALKITELQPAGGKRMSIQAFAAGRTIEVGTVL.

110–113 (SLLP) is a (6S)-5,6,7,8-tetrahydrofolate binding site.

It belongs to the Fmt family.

The enzyme catalyses L-methionyl-tRNA(fMet) + (6R)-10-formyltetrahydrofolate = N-formyl-L-methionyl-tRNA(fMet) + (6S)-5,6,7,8-tetrahydrofolate + H(+). Functionally, attaches a formyl group to the free amino group of methionyl-tRNA(fMet). The formyl group appears to play a dual role in the initiator identity of N-formylmethionyl-tRNA by promoting its recognition by IF2 and preventing the misappropriation of this tRNA by the elongation apparatus. In Neisseria meningitidis serogroup C (strain 053442), this protein is Methionyl-tRNA formyltransferase.